Reading from the N-terminus, the 91-residue chain is uncharacterized protein (91 aa).

The first 25 residues, 1-25 (MLLQRIGIEHLRIWILLLLISLVPA), serve as a signal peptide directing secretion.

This is an uncharacterized protein from Caenorhabditis elegans.